Consider the following 134-residue polypeptide: UPF0412 protein YaaI (134 aa).

The N-terminal stretch at 1-23 (MKSVITISASLAISLMLCCTAQA) is a signal peptide.

The protein belongs to the UPF0412 family.

This chain is UPF0412 protein YaaI, found in Escherichia coli O127:H6 (strain E2348/69 / EPEC).